We begin with the raw amino-acid sequence, 321 residues long: Malate dehydrogenase (321 aa).

NAD(+)-binding positions include glycine 13 to glycine 18 and aspartate 38. Arginine 87 and arginine 93 together coordinate substrate. Residues asparagine 100 and valine 123–asparagine 125 each bind NAD(+). Residues asparagine 125 and arginine 156 each contribute to the substrate site. Histidine 180 (proton acceptor) is an active-site residue.

Belongs to the LDH/MDH superfamily. MDH type 3 family.

The enzyme catalyses (S)-malate + NAD(+) = oxaloacetate + NADH + H(+). Its function is as follows. Catalyzes the reversible oxidation of malate to oxaloacetate. This Anaplasma phagocytophilum (strain HZ) protein is Malate dehydrogenase.